Reading from the N-terminus, the 144-residue chain is TSC22 domain family protein 1 (144 aa).

The interval 77–98 (LKEQIKELIEKNSQLEQENNLL) is leucine-zipper. Positions 109–144 (QFQAQLQTGSPPATTQPQGTTQPPAQPASQGSGPTA) are disordered. Over residues 115 to 144 (QTGSPPATTQPQGTTQPPAQPASQGSGPTA) the composition is skewed to low complexity.

Belongs to the TSC-22/Dip/Bun family. As to quaternary structure, forms homodimers. Forms a heterodimer with TSC22D4/THG1. Interacts with histone H1-2. Interacts with GNL3.

It is found in the cytoplasm. It localises to the nucleus. Its function is as follows. Transcriptional repressor. Plays a role in the repression of hematopoietic precursor cell growth. Promotes IL2 deprivation-induced apoptosis in T-lymphocytes, via repression of TSC22D3/GILZ transcription and activation of the caspase cascade. Positively regulates cell death in response to TGFB3 during mammary gland involution. This is TSC22 domain family protein 1 from Bos taurus (Bovine).